Consider the following 668-residue polypeptide: tRNA 5-methylaminomethyl-2-thiouridine biosynthesis bifunctional protein MnmC (668 aa).

Residues 1–245 are tRNA (mnm(5)s(2)U34)-methyltransferase; the sequence is MKHYAIQPAN…KREMLCGVME (245 aa). Residues 270-668 form an FAD-dependent cmnm(5)s(2)U34 oxidoreductase region; that stretch reads IGGGIASALL…LLKGKAVKAG (399 aa).

In the N-terminal section; belongs to the methyltransferase superfamily. tRNA (mnm(5)s(2)U34)-methyltransferase family. This sequence in the C-terminal section; belongs to the DAO family. FAD serves as cofactor.

The protein localises to the cytoplasm. It catalyses the reaction 5-aminomethyl-2-thiouridine(34) in tRNA + S-adenosyl-L-methionine = 5-methylaminomethyl-2-thiouridine(34) in tRNA + S-adenosyl-L-homocysteine + H(+). Catalyzes the last two steps in the biosynthesis of 5-methylaminomethyl-2-thiouridine (mnm(5)s(2)U) at the wobble position (U34) in tRNA. Catalyzes the FAD-dependent demodification of cmnm(5)s(2)U34 to nm(5)s(2)U34, followed by the transfer of a methyl group from S-adenosyl-L-methionine to nm(5)s(2)U34, to form mnm(5)s(2)U34. The chain is tRNA 5-methylaminomethyl-2-thiouridine biosynthesis bifunctional protein MnmC from Escherichia coli (strain SMS-3-5 / SECEC).